The primary structure comprises 344 residues: Ion-translocating oxidoreductase complex subunit D (344 aa).

Helical transmembrane passes span 23–43 (LVLG…GAGT), 44–64 (LLNL…MLAL), 80–100 (VTAL…LTLV), and 120–140 (PFNP…LEMT). Thr-172 is subject to FMN phosphoryl threonine. Transmembrane regions (helical) follow at residues 198–218 (LGGA…LFLL), 222–242 (LFTW…SLLF), 252–272 (GSPL…FIVT), 285–305 (LLFG…GGYP), and 306–326 (DGVA…DYYT).

The protein belongs to the NqrB/RnfD family. The complex is composed of six subunits: RnfA, RnfB, RnfC, RnfD, RnfE and RnfG. The cofactor is FMN.

Its subcellular location is the cell inner membrane. In terms of biological role, part of a membrane-bound complex that couples electron transfer with translocation of ions across the membrane. This is Ion-translocating oxidoreductase complex subunit D from Pseudomonas paraeruginosa (strain DSM 24068 / PA7) (Pseudomonas aeruginosa (strain PA7)).